A 314-amino-acid chain; its full sequence is Pantothenate kinase (314 aa).

ATP is bound at residue 93-100 (GSVAVGKS).

The protein belongs to the prokaryotic pantothenate kinase family.

Its subcellular location is the cytoplasm. It catalyses the reaction (R)-pantothenate + ATP = (R)-4'-phosphopantothenate + ADP + H(+). It functions in the pathway cofactor biosynthesis; coenzyme A biosynthesis; CoA from (R)-pantothenate: step 1/5. The chain is Pantothenate kinase from Shewanella denitrificans (strain OS217 / ATCC BAA-1090 / DSM 15013).